Reading from the N-terminus, the 639-residue chain is Sperm-associated antigen 16 protein (639 aa).

A coiled-coil region spans residues 146-218 (DVYSQVMLLE…GLKLHYASYE (73 aa)). The tract at residues 280-333 (RESGDRAGHSCEKENSSEGPTQKSLREAREEVGYKSKLKNEKKDSEFPVDMQPD) is disordered. Composition is skewed to basic and acidic residues over residues 281-295 (ESGD…KENS) and 303-325 (SLRE…KDSE). WD repeat units lie at residues 358–397 (LHEL…VLLT), 400–439 (GHTD…CTLT), 442–481 (GHNH…CRYT), 484–523 (GHTD…CEQS), 526–565 (GHMH…PIVS), 568–608 (VGPS…HKLV), and 609–639 (GHES…RLWI).

As to quaternary structure, interacts with SPAG6 and STK36. In terms of processing, phosphorylated by TSSK2. As to expression, expressed in testis.

It localises to the cytoplasm. The protein localises to the cytoskeleton. The protein resides in the cilium axoneme. Its subcellular location is the flagellum axoneme. It is found in the cell projection. It localises to the cilium. The protein localises to the flagellum. In terms of biological role, necessary for sperm flagellar function. Plays a role in motile ciliogenesis. May help to recruit STK36 to the cilium or apical surface of the cell to initiate subsequent steps of construction of the central pair apparatus of motile cilia. The protein is Sperm-associated antigen 16 protein (Spag16) of Mus musculus (Mouse).